The sequence spans 58 residues: Ranakinin-N (58 aa).

The signal sequence occupies residues 1–22 (MFTMKKSLLLLFFLGTISMSLC). A propeptide spanning residues 23–43 (EEKRDADEEETEGEAKMEDIK) is cleaved from the precursor. Positions 25–58 (KRDADEEETEGEAKMEDIKRAEAVPPGFTPFRKP) are disordered. The segment covering 35-46 (GEAKMEDIKRAE) has biased composition (basic and acidic residues).

Expressed by the skin glands.

It is found in the secreted. Induces contraction of intestinal smooth muscle in isolated guinea pig ileum. May induce relaxation of arterial smooth muscle. May target bradykinin receptors (BDKRB). Lacks antibacterial activity against the Gram-positive bacterium S.aureus and the Gram-negative bacteria E.coli and B.dysenteria, and antifungal activity against C.albicans. The protein is Ranakinin-N of Hylarana nigrovittata (Black-striped frog).